We begin with the raw amino-acid sequence, 95 residues long: MERAPEDAGPQREPYNEWALELLEELKNEAVRHFPRIWLHGLGQHIYNTYGDTWEGVEAIIRILQQLLFIHYRIGCQHSRIGITPQRRRNGASRS.

Residues 1-42 (MERAPEDAGPQREPYNEWALELLEELKNEAVRHFPRIWLHGL) form a homooligomerization region. Residues Ser-79, Ser-93, and Ser-95 each carry the phosphoserine; by host modification.

It belongs to the HIV-1 VPR protein family. Homooligomer, may form homodimer. Interacts with p6-gag region of the Pr55 Gag precursor protein through a (Leu-X-X)4 motif near the C-terminus of the P6gag protein. Interacts with host UNG. May interact with host RAD23A/HHR23A. Interacts with host VPRBP/DCAF1, leading to hijack the CUL4A-RBX1-DDB1-DCAF1/VPRBP complex, mediating ubiquitination of host proteins such as TERT and ZGPAT and arrest of the cell cycle in G2 phase. Phosphorylated on several residues by host. These phosphorylations regulate VPR activity for the nuclear import of the HIV-1 pre-integration complex.

Its subcellular location is the virion. It localises to the host nucleus. The protein localises to the host extracellular space. Its function is as follows. During virus replication, may deplete host UNG protein, and incude G2-M cell cycle arrest. Acts by targeting specific host proteins for degradation by the 26S proteasome, through association with the cellular CUL4A-DDB1 E3 ligase complex by direct interaction with host VPRPB/DCAF-1. Cell cycle arrest reportedly occurs within hours of infection and is not blocked by antiviral agents, suggesting that it is initiated by the VPR carried into the virion. Additionally, VPR induces apoptosis in a cell cycle dependent manner suggesting that these two effects are mechanistically linked. Detected in the serum and cerebrospinal fluid of AIDS patient, VPR may also induce cell death to bystander cells. In terms of biological role, during virus entry, plays a role in the transport of the viral pre-integration (PIC) complex to the host nucleus. This function is crucial for viral infection of non-dividing macrophages. May act directly at the nuclear pore complex, by binding nucleoporins phenylalanine-glycine (FG)-repeat regions. This is Protein Vpr from Homo sapiens (Human).